Reading from the N-terminus, the 138-residue chain is MAKPILRIGSRKNTRSGSRKNVRRIPKGIIHVQASFNNTIVTVTDVRGRVISWSSAGTCGFRGTRRGTPFAAQTAAGNAIRAVVDQGMQRAEVRIKGPGLGRDAALRAIRRSGILLSFVRDVTPMPHNGCRPPKKRRV.

The tract at residues 1–22 (MAKPILRIGSRKNTRSGSRKNV) is disordered. The span at 9-22 (GSRKNTRSGSRKNV) shows a compositional bias: basic residues.

It belongs to the universal ribosomal protein uS11 family. In terms of assembly, part of the 30S ribosomal subunit.

It localises to the plastid. It is found in the chloroplast. The chain is Small ribosomal subunit protein uS11c from Arabis hirsuta (Hairy rock-cress).